The primary structure comprises 66 residues: Toxin Os1 (66 aa).

The LCN-type CS-alpha/beta domain occupies 2 to 66; it reads RDGYIVQLHN…PIKWLDPKCY (65 aa). 4 disulfide bridges follow: cysteine 12–cysteine 65, cysteine 16–cysteine 37, cysteine 22–cysteine 47, and cysteine 26–cysteine 49.

This sequence belongs to the long (4 C-C) scorpion toxin superfamily. Sodium channel inhibitor family. Alpha subfamily. Expressed by the venom gland.

The protein resides in the secreted. In terms of biological role, alpha toxins bind voltage-independently at site-3 of sodium channels (Nav) and inhibit the inactivation of the activated channels, thereby blocking neuronal transmission. This toxin possesses a high paralytic activity against mice. The chain is Toxin Os1 from Orthochirus scrobiculosus (Central Asian scorpion).